A 336-amino-acid polypeptide reads, in one-letter code: Nicotinate-nucleotide--dimethylbenzimidazole phosphoribosyltransferase (336 aa).

The active-site Proton acceptor is the Glu304.

It belongs to the CobT family.

It catalyses the reaction 5,6-dimethylbenzimidazole + nicotinate beta-D-ribonucleotide = alpha-ribazole 5'-phosphate + nicotinate + H(+). It functions in the pathway nucleoside biosynthesis; alpha-ribazole biosynthesis; alpha-ribazole from 5,6-dimethylbenzimidazole: step 1/2. Its function is as follows. Catalyzes the synthesis of alpha-ribazole-5'-phosphate from nicotinate mononucleotide (NAMN) and 5,6-dimethylbenzimidazole (DMB). This is Nicotinate-nucleotide--dimethylbenzimidazole phosphoribosyltransferase from Mesorhizobium japonicum (strain LMG 29417 / CECT 9101 / MAFF 303099) (Mesorhizobium loti (strain MAFF 303099)).